The following is a 178-amino-acid chain: Translation initiation factor IF-3 (178 aa).

It belongs to the IF-3 family. Monomer.

The protein localises to the cytoplasm. IF-3 binds to the 30S ribosomal subunit and shifts the equilibrium between 70S ribosomes and their 50S and 30S subunits in favor of the free subunits, thus enhancing the availability of 30S subunits on which protein synthesis initiation begins. This is Translation initiation factor IF-3 from Ureaplasma parvum serovar 3 (strain ATCC 700970).